The primary structure comprises 456 residues: tRNA modification GTPase MnmE (456 aa).

3 residues coordinate (6S)-5-formyl-5,6,7,8-tetrahydrofolate: Arg24, Glu81, and Lys120. Residues Gly216 to Gly379 form the TrmE-type G domain. Asn226 contributes to the K(+) binding site. GTP contacts are provided by residues Asn226–Ser231, Thr245–Thr251, Asp270–Gly273, and Asn335–Asp338. Ser230 is a Mg(2+) binding site. K(+) contacts are provided by Thr245, Ile247, and Thr250. Thr251 contributes to the Mg(2+) binding site. Lys456 lines the (6S)-5-formyl-5,6,7,8-tetrahydrofolate pocket.

Belongs to the TRAFAC class TrmE-Era-EngA-EngB-Septin-like GTPase superfamily. TrmE GTPase family. In terms of assembly, homodimer. Heterotetramer of two MnmE and two MnmG subunits. Requires K(+) as cofactor.

It is found in the cytoplasm. In terms of biological role, exhibits a very high intrinsic GTPase hydrolysis rate. Involved in the addition of a carboxymethylaminomethyl (cmnm) group at the wobble position (U34) of certain tRNAs, forming tRNA-cmnm(5)s(2)U34. This chain is tRNA modification GTPase MnmE, found in Pseudomonas putida (strain GB-1).